The chain runs to 1025 residues: Multidrug resistance protein MdtC (1025 aa).

12 consecutive transmembrane segments (helical) span residues 16 to 36 (LLTL…PVAP), 333 to 353 (EVEQ…FVFL), 360 to 380 (LIPA…MYLC), 387 to 407 (LSLM…IVVL), 431 to 451 (VGFT…PLLM), 459 to 479 (FFAE…FVSV), 528 to 548 (WVLL…ISIP), 853 to 873 (LWLM…LYES), 875 to 895 (VHPL…LLAL), 897 to 917 (LFDT…IGIV), 953 to 973 (PILM…LTSG), and 984 to 1004 (ITIA…TPVV).

It belongs to the resistance-nodulation-cell division (RND) (TC 2.A.6) family. MdtC subfamily. As to quaternary structure, part of a tripartite efflux system composed of MdtA, MdtB and MdtC. MdtC forms a heteromultimer with MdtB.

The protein localises to the cell inner membrane. This is Multidrug resistance protein MdtC from Pantoea ananatis (strain AJ13355).